A 100-amino-acid polypeptide reads, in one-letter code: Integration host factor subunit alpha (100 aa).

This sequence belongs to the bacterial histone-like protein family. Heterodimer of an alpha and a beta chain.

Its function is as follows. This protein is one of the two subunits of integration host factor, a specific DNA-binding protein that functions in genetic recombination as well as in transcriptional and translational control. This chain is Integration host factor subunit alpha, found in Jannaschia sp. (strain CCS1).